Consider the following 225-residue polypeptide: Transcriptional regulatory protein CssR (225 aa).

Residues 4-117 form the Response regulatory domain; it reads TIYLVEDEDN…ELIIRVQKLL (114 aa). 4-aspartylphosphate is present on D52. A DNA-binding region (ompR/PhoB-type) is located at residues 129-224; sequence KNEIAVSSYR…IYGFGYRMMS (96 aa).

Phosphorylated by CssS.

Its subcellular location is the cytoplasm. In terms of biological role, member of the two-component regulatory system CssS/CssR required to control the cellular response to secretion stress. The protein is Transcriptional regulatory protein CssR (cssR) of Bacillus subtilis (strain 168).